Here is a 319-residue protein sequence, read N- to C-terminus: Ribonuclease Z (319 aa).

Residues His-62, His-64, Asp-66, His-67, His-139, Asp-210, and His-268 each contribute to the Zn(2+) site. Residue Asp-66 is the Proton acceptor of the active site.

This sequence belongs to the RNase Z family. Homodimer. Zn(2+) serves as cofactor.

It carries out the reaction Endonucleolytic cleavage of RNA, removing extra 3' nucleotides from tRNA precursor, generating 3' termini of tRNAs. A 3'-hydroxy group is left at the tRNA terminus and a 5'-phosphoryl group is left at the trailer molecule.. In terms of biological role, zinc phosphodiesterase, which displays some tRNA 3'-processing endonuclease activity. Probably involved in tRNA maturation, by removing a 3'-trailer from precursor tRNA. In Nostoc punctiforme (strain ATCC 29133 / PCC 73102), this protein is Ribonuclease Z.